The sequence spans 615 residues: Dihydroxy-acid dehydratase (615 aa).

Asp83 provides a ligand contact to Mg(2+). Residue Cys124 coordinates [2Fe-2S] cluster. Residues Asp125 and Lys126 each contribute to the Mg(2+) site. Lys126 carries the N6-carboxylysine modification. [2Fe-2S] cluster is bound at residue Cys199. Mg(2+) is bound at residue Glu495. The active-site Proton acceptor is Ser521.

The protein belongs to the IlvD/Edd family. Homodimer. Requires [2Fe-2S] cluster as cofactor. Mg(2+) serves as cofactor.

The enzyme catalyses (2R)-2,3-dihydroxy-3-methylbutanoate = 3-methyl-2-oxobutanoate + H2O. It carries out the reaction (2R,3R)-2,3-dihydroxy-3-methylpentanoate = (S)-3-methyl-2-oxopentanoate + H2O. It functions in the pathway amino-acid biosynthesis; L-isoleucine biosynthesis; L-isoleucine from 2-oxobutanoate: step 3/4. It participates in amino-acid biosynthesis; L-valine biosynthesis; L-valine from pyruvate: step 3/4. Functions in the biosynthesis of branched-chain amino acids. Catalyzes the dehydration of (2R,3R)-2,3-dihydroxy-3-methylpentanoate (2,3-dihydroxy-3-methylvalerate) into 2-oxo-3-methylpentanoate (2-oxo-3-methylvalerate) and of (2R)-2,3-dihydroxy-3-methylbutanoate (2,3-dihydroxyisovalerate) into 2-oxo-3-methylbutanoate (2-oxoisovalerate), the penultimate precursor to L-isoleucine and L-valine, respectively. In Corynebacterium jeikeium (strain K411), this protein is Dihydroxy-acid dehydratase.